Reading from the N-terminus, the 663-residue chain is Terreic acid cluster-specific transcription factor atF (663 aa).

Residues 1–20 (MFATFNSSMDNRSSANSPVA) show a composition bias toward polar residues. 2 disordered regions span residues 1-28 (MFATFNSSMDNRSSANSPVAPSSRPKRT) and 55-126 (TRGV…SPSQ). Positions 34–60 (CDWCRLNRVKCDDGQPCKNCRTRGVRC) form a DNA-binding region, zn(2)-C6 fungal-type. Residues 55–64 (TRGVRCRKGS) show a composition bias toward basic residues. Composition is skewed to low complexity over residues 73–88 (SSSAAASERARSQGAQ) and 105–125 (ATTSRRNSRTPSSSPSSPSPS).

The protein resides in the nucleus. Transcription factor that regulates the expression of the gene cluster that mediates the biosynthesis of terreic acid, a quinone epoxide inhibitor of Bruton's tyrosine kinase. The polypeptide is Terreic acid cluster-specific transcription factor atF (Aspergillus terreus (strain NIH 2624 / FGSC A1156)).